Here is a 321-residue protein sequence, read N- to C-terminus: MIKYALVGDVGGTNARLALCDIASGEISQAKTYSGLDYPSLEAVIRVYLEEHKVEVKDGCIAIACPITGDWVAMTNHTWAFSIAEMKKNLGFSHLEIINDFTAVSMAIPMLKKEHLIQFGGAEPVEGKPIAVYGAGTGLGVAHLVHVDKRWVSLPGEGGHVDFAPNSEEEAIILEILRAEIGHVSAERVLSGPGLVNLYRAIVKADNRLPENLKPKDITERALADSCTDCRRALSLFCVIMGRFGGNLALNLGTFGGVFIAGGIVPRFLEFFKASGFRAAFEDKGRFKEYVHDIPVYLIVHDNPGLLGSGAHLRQTLGHIL.

Residue 8–13 (GDVGGT) participates in ATP binding.

It belongs to the bacterial glucokinase family.

The protein localises to the cytoplasm. It catalyses the reaction D-glucose + ATP = D-glucose 6-phosphate + ADP + H(+). This chain is Glucokinase, found in Shigella boydii serotype 18 (strain CDC 3083-94 / BS512).